Here is a 780-residue protein sequence, read N- to C-terminus: Lon protease (780 aa).

The region spanning 11-204 is the Lon N-terminal domain; it reads IPVLPLRDVV…RLMAIMESEI (194 aa). Residue 356-363 participates in ATP binding; that stretch reads GPPGVGKT. In terms of domain architecture, Lon proteolytic spans 592–773; it reads KNQIGQVIGL…KEVLNLSLEN (182 aa). Residues Ser-679 and Lys-722 contribute to the active site.

The protein belongs to the peptidase S16 family. As to quaternary structure, homohexamer. Organized in a ring with a central cavity.

The protein resides in the cytoplasm. It carries out the reaction Hydrolysis of proteins in presence of ATP.. Its function is as follows. ATP-dependent serine protease that mediates the selective degradation of mutant and abnormal proteins as well as certain short-lived regulatory proteins. Required for cellular homeostasis and for survival from DNA damage and developmental changes induced by stress. Degrades polypeptides processively to yield small peptide fragments that are 5 to 10 amino acids long. Binds to DNA in a double-stranded, site-specific manner. In Buchnera aphidicola subsp. Baizongia pistaciae (strain Bp), this protein is Lon protease.